The chain runs to 459 residues: 11S globulin seed storage protein 2 (459 aa).

Residues 1 to 21 form the signal peptide; sequence MVAFKFLLALSLSLLVSAAIA. 2 cysteine pairs are disulfide-bonded: C34–C67 and C110–C284. Cupin type-1 domains follow at residues 37-237 and 290-439; these read QRIS…ETIR and TNVE…NQAQ. Residues 118-139 are disordered; it reads RSQRTMERTEASEQQDRGSVRD. Basic and acidic residues predominate over residues 121 to 139; it reads RTMERTEASEQQDRGSVRD.

This sequence belongs to the 11S seed storage protein (globulins) family. In terms of assembly, homohexamer. Each subunit is composed of an acidic and a basic chain derived from a single precursor and linked by a disulfide bond. Expressed in seeds (at protein level). Expressed in seeds.

In terms of biological role, seed storage protein. This Sesamum indicum (Oriental sesame) protein is 11S globulin seed storage protein 2.